The sequence spans 194 residues: Mpv17-like protein (194 aa).

Topologically, residues 1-14 are cytoplasmic; sequence MASWWRAFPQAARR. Residues 15–34 traverse the membrane as a helical segment; that stretch reads YPWPTNVLLYAGLFSAGDAL. A targeting to peroxisomes region spans residues 16–55; the sequence is PWPTNVLLYAGLFSAGDALQQRLRGGPADWRQTRRVATLA. The Lumenal portion of the chain corresponds to 35–50; the sequence is QQRLRGGPADWRQTRR. A helical membrane pass occupies residues 51–67; sequence VATLAVTFHGNFNYVWL. At 68-91 the chain is on the cytoplasmic side; sequence RLLERALPGRAPRTVLAKVLCDQT. The helical transmembrane segment at 92-110 threads the bilayer; the sequence is VGGPIALSAFYVGMSVLQG. Topologically, residues 111–150 are lumenal; that stretch reads KDDIFLDLKQKFWNTYKSGLMYWPFVQLTNFSLVPVHWRT. A helical membrane pass occupies residues 151–168; that stretch reads AYTGLCAFLWATFLCFSQ. At 169-194 the chain is on the cytoplasmic side; sequence QSGDGTLQSIFIFLRRKEASDKSPEK.

Belongs to the peroxisomal membrane protein PXMP2/4 family. Isoform 1 and isoform 3 are expressed in the kidney (at protein level). Isoform 1 is expressed in the kidney, spleen, heart, brain, lung and liver. Isoform 3 is expressed in the kidney. Isoform 1 and isoform 3 expression increase during development, reache their highest level in adulthood and decrease with aging.

It is found in the peroxisome membrane. The protein resides in the cytoplasm. Functionally, participates in reactive oxygen species metabolism by up- or down-regulation of the genes of antioxidant enzymes. Protective against the mitochondrial apoptotic cascade. Its function is as follows. Participates in reactive oxygen species metabolism by up- or down-regulation of the genes of antioxidant enzymes. In Mus musculus (Mouse), this protein is Mpv17-like protein (Mpv17l).